Reading from the N-terminus, the 714-residue chain is Methyl-accepting chemotaxis protein TlpQ (714 aa).

A helical transmembrane segment spans residues Ile-12–Val-32. One can recognise a Cache domain in the interval Leu-50–Asp-290. Histamine contacts are provided by residues Glu-170, Tyr-208–Asp-210, and Asp-239. Residues Thr-360–Leu-380 form a helical membrane-spanning segment. Residues Arg-383–Arg-437 enclose the HAMP domain. Residues Ser-442–Arg-678 enclose the Methyl-accepting transducer domain.

Belongs to the methyl-accepting chemotaxis (MCP) protein family. Homotetramer.

It is found in the cell membrane. Its function is as follows. Chemotactic-signal transducers respond to changes in the concentration of attractants and repellents in the environment, transduce a signal from the outside to the inside of the cell, and facilitate sensory adaptation through the variation of the level of methylation. TlpQ is a chemoreceptor that binds and mediates chemotaxis to histamine, a key biological signaling molecule. It binds histamine with high affinity, which permits responses to very low histamine concentrations. Chemotaxis to histamine may play a role in the virulence of P.aeruginosa by recruiting cells at the infection site and consequently modulating the expression of quorum-sensing-dependent virulence genes. TlpQ also binds and mediates chemotaxis to polyamines such as putrescine, spermidine, cadaverine, agmatine and ethylenediamine. In addition, binds the quorum-sensing signal autoinducer 2 (AI-2), thus inducing chemotaxis toward AI-2 and biofilm formation. The polypeptide is Methyl-accepting chemotaxis protein TlpQ (Pseudomonas aeruginosa (strain ATCC 15692 / DSM 22644 / CIP 104116 / JCM 14847 / LMG 12228 / 1C / PRS 101 / PAO1)).